A 469-amino-acid chain; its full sequence is Glutamine synthetase (469 aa).

Positions 15-96 (EDVKFIDVRF…INFFIHDPIT (82 aa)) constitute a GS beta-grasp domain. One can recognise a GS catalytic domain in the interval 104–469 (PRNVAKKAEA…PYEYEQYYDV (366 aa)). Mg(2+) contacts are provided by Glu-129 and Glu-131. Glu-205 is an ATP binding site. The Mg(2+) site is built by Glu-210 and Glu-218. An ATP-binding site is contributed by 221-223 (YKF). Residues 262 to 263 (NG) and Gly-263 each bind L-glutamate. His-267 provides a ligand contact to Mg(2+). ATP contacts are provided by residues 269–271 (HQS) and Ser-271. L-glutamate is bound by residues Arg-320, Glu-326, and Arg-338. Positions 338, 343, and 352 each coordinate ATP. Position 357 (Glu-357) interacts with Mg(2+). Arg-359 contacts L-glutamate. At Tyr-397 the chain carries O-AMP-tyrosine.

This sequence belongs to the glutamine synthetase family. Oligomer of 12 subunits arranged in the form of two hexagons. Mg(2+) is required as a cofactor.

Its subcellular location is the cytoplasm. The catalysed reaction is L-glutamate + NH4(+) + ATP = L-glutamine + ADP + phosphate + H(+). The activity of this enzyme could be controlled by adenylation under conditions of abundant glutamine. Catalyzes the ATP-dependent biosynthesis of glutamine from glutamate and ammonia. The protein is Glutamine synthetase of Streptomyces viridochromogenes.